Reading from the N-terminus, the 1115-residue chain is Carbamoyl phosphate synthase large chain (1115 aa).

A carboxyphosphate synthetic domain region spans residues 1–407 (MPRRTDLHHV…ALGKVMRSLE (407 aa)). ATP-binding residues include R134, R174, G180, G181, E213, I215, E220, G246, V247, H248, Q290, and E304. Residues 138–333 (KDIVAKAGGE…IAKIAAKLAI (196 aa)) form the ATP-grasp 1 domain. Q290, E304, and N306 together coordinate Mg(2+). Q290, E304, and N306 together coordinate Mn(2+). An oligomerization domain region spans residues 408–559 (TTRAGFWTAP…ELDPAAETEV (152 aa)). A carbamoyl phosphate synthetic domain region spans residues 560–965 (APQTERPKVL…AFAKSQTAAY (406 aa)). Residues 693-884 (GDLLSAAGLP…LAKACARIML (192 aa)) enclose the ATP-grasp 2 domain. ATP contacts are provided by R729, R768, L770, E775, G800, I801, H802, S803, Q843, and E855. Residues Q843, E855, and N857 each contribute to the Mg(2+) site. Mn(2+) is bound by residues Q843, E855, and N857. The MGS-like domain maps to 966–1113 (GSLPAQGTVF…QELHRVIGGV (148 aa)). Residues 966–1115 (GSLPAQGTVF…LHRVIGGVER (150 aa)) form an allosteric domain region.

The protein belongs to the CarB family. As to quaternary structure, composed of two chains; the small (or glutamine) chain promotes the hydrolysis of glutamine to ammonia, which is used by the large (or ammonia) chain to synthesize carbamoyl phosphate. Tetramer of heterodimers (alpha,beta)4. It depends on Mg(2+) as a cofactor. Mn(2+) serves as cofactor.

The catalysed reaction is hydrogencarbonate + L-glutamine + 2 ATP + H2O = carbamoyl phosphate + L-glutamate + 2 ADP + phosphate + 2 H(+). It catalyses the reaction hydrogencarbonate + NH4(+) + 2 ATP = carbamoyl phosphate + 2 ADP + phosphate + 2 H(+). It functions in the pathway amino-acid biosynthesis; L-arginine biosynthesis; carbamoyl phosphate from bicarbonate: step 1/1. It participates in pyrimidine metabolism; UMP biosynthesis via de novo pathway; (S)-dihydroorotate from bicarbonate: step 1/3. Its function is as follows. Large subunit of the glutamine-dependent carbamoyl phosphate synthetase (CPSase). CPSase catalyzes the formation of carbamoyl phosphate from the ammonia moiety of glutamine, carbonate, and phosphate donated by ATP, constituting the first step of 2 biosynthetic pathways, one leading to arginine and/or urea and the other to pyrimidine nucleotides. The large subunit (synthetase) binds the substrates ammonia (free or transferred from glutamine from the small subunit), hydrogencarbonate and ATP and carries out an ATP-coupled ligase reaction, activating hydrogencarbonate by forming carboxy phosphate which reacts with ammonia to form carbamoyl phosphate. This chain is Carbamoyl phosphate synthase large chain, found in Mycobacterium bovis (strain ATCC BAA-935 / AF2122/97).